We begin with the raw amino-acid sequence, 158 residues long: 6,7-dimethyl-8-ribityllumazine synthase 2 (158 aa).

5-amino-6-(D-ribitylamino)uracil-binding positions include Trp20, 54 to 56 (AYE), and 78 to 80 (FVI). The active-site Proton donor is Arg86. Ser111 contributes to the 5-amino-6-(D-ribitylamino)uracil binding site. His125 is a binding site for (2S)-2-hydroxy-3-oxobutyl phosphate.

It belongs to the DMRL synthase family. As to quaternary structure, homodecamer, arranged as a dimer of pentamers.

It localises to the cytoplasm. The catalysed reaction is (2S)-2-hydroxy-3-oxobutyl phosphate + 5-amino-6-(D-ribitylamino)uracil = 6,7-dimethyl-8-(1-D-ribityl)lumazine + phosphate + 2 H2O + H(+). Its pathway is cofactor biosynthesis; riboflavin biosynthesis; riboflavin from 2-hydroxy-3-oxobutyl phosphate and 5-amino-6-(D-ribitylamino)uracil: step 1/2. Catalyzes the formation of 6,7-dimethyl-8-ribityllumazine by condensation of 5-amino-6-(D-ribitylamino)uracil with 3,4-dihydroxy-2-butanone 4-phosphate. This is the penultimate step in the biosynthesis of riboflavin. The isozyme RibH2 but not RibH1 is essential for Brucella intracellular survival and replication inside macrophages or in mice. Displays low catalytic activity in comparison with the isozyme RibH1. Is a highly immunogenic protein. Activates dendritic cells (DCs) in vitro, increasing the levels of costimulatory molecules and the secretion of pro-inflammatory cytokines, and recruits DCs, B cells and CD8+ T cells in vivo, both effects in a TLR4-dependent manner. Induces the cross presentation of covalently attached peptides and generates a strong and long-lasting humoral immune response without adjuvants; TLR4 signaling is necessary for the induction of the cytotoxic response but not for antigen cross presentation. Elicits a TLR4-mediated protective response against B16 melanoma in mice, slowing tumor growth and prolonging mice survival. The sequence is that of 6,7-dimethyl-8-ribityllumazine synthase 2 from Brucella abortus (strain 2308).